A 349-amino-acid polypeptide reads, in one-letter code: Magnesium-protoporphyrin IX monomethyl ester [oxidative] cyclase (349 aa).

It belongs to the AcsF family. Fe cation serves as cofactor.

The protein resides in the plastid. It localises to the chloroplast. The catalysed reaction is Mg-protoporphyrin IX 13-monomethyl ester + 3 NADPH + 3 O2 + 2 H(+) = 3,8-divinyl protochlorophyllide a + 3 NADP(+) + 5 H2O. It functions in the pathway porphyrin-containing compound metabolism; chlorophyll biosynthesis (light-independent). Catalyzes the formation of the isocyclic ring in chlorophyll biosynthesis. Mediates the cyclase reaction, which results in the formation of divinylprotochlorophyllide (Pchlide) characteristic of all chlorophylls from magnesium-protoporphyrin IX 13-monomethyl ester (MgPMME). The polypeptide is Magnesium-protoporphyrin IX monomethyl ester [oxidative] cyclase (Porphyra purpurea (Red seaweed)).